We begin with the raw amino-acid sequence, 218 residues long: Phosphoribosylformylglycinamidine synthase subunit PurQ (218 aa).

The 217-residue stretch at 2-218 (RVGVIRFPGS…FFRGILKFRG (217 aa)) folds into the Glutamine amidotransferase type-1 domain. Cys85 (nucleophile) is an active-site residue. Catalysis depends on residues His192 and Glu194.

Part of the FGAM synthase complex composed of 1 PurL, 1 PurQ and 2 PurS subunits.

The protein localises to the cytoplasm. The catalysed reaction is N(2)-formyl-N(1)-(5-phospho-beta-D-ribosyl)glycinamide + L-glutamine + ATP + H2O = 2-formamido-N(1)-(5-O-phospho-beta-D-ribosyl)acetamidine + L-glutamate + ADP + phosphate + H(+). It carries out the reaction L-glutamine + H2O = L-glutamate + NH4(+). It participates in purine metabolism; IMP biosynthesis via de novo pathway; 5-amino-1-(5-phospho-D-ribosyl)imidazole from N(2)-formyl-N(1)-(5-phospho-D-ribosyl)glycinamide: step 1/2. Part of the phosphoribosylformylglycinamidine synthase complex involved in the purines biosynthetic pathway. Catalyzes the ATP-dependent conversion of formylglycinamide ribonucleotide (FGAR) and glutamine to yield formylglycinamidine ribonucleotide (FGAM) and glutamate. The FGAM synthase complex is composed of three subunits. PurQ produces an ammonia molecule by converting glutamine to glutamate. PurL transfers the ammonia molecule to FGAR to form FGAM in an ATP-dependent manner. PurS interacts with PurQ and PurL and is thought to assist in the transfer of the ammonia molecule from PurQ to PurL. The polypeptide is Phosphoribosylformylglycinamidine synthase subunit PurQ (Methanothermobacter thermautotrophicus (strain ATCC 29096 / DSM 1053 / JCM 10044 / NBRC 100330 / Delta H) (Methanobacterium thermoautotrophicum)).